Consider the following 404-residue polypeptide: Caspase-1 (404 aa).

The 91-residue stretch at 1-91 (MADKVLKEKR…HLAGVLELST (91 aa)) folds into the CARD domain. The propeptide occupies 1-119 (MADKVLKEKR…PFPAPQTVQD (119 aa)). Residues 111–132 (FPAPQTVQDNPVKPASSEPRGS) are disordered. Residues H237 and C285 contribute to the active site. Positions 298–316 (SVGPSGNSSLLAAEDFEYD) are excised as a propeptide. The residue at position 302 (S302) is a Phosphoserine.

The protein belongs to the peptidase C14A family. In terms of assembly, heterotetramer that consists of two anti-parallel arranged heterodimers, each one formed by a 20 kDa (Caspase-1 subunit p20) and a 10 kDa (Caspase-1 subunit p10) subunit. May be a component of the inflammasome, a protein complex which also includes PYCARD, CARD8 and NLRP2 and whose function would be the activation of pro-inflammatory caspases. Component of the AIM2 PANoptosome complex, a multiprotein complex that drives inflammatory cell death (PANoptosis). Both the p10 and p20 subunits interact with MEFV. Interacts with CARD17P/INCA and CARD18. Interacts with SERPINB1; this interaction regulates CASP1 activity. As to quaternary structure, heterotetramer that consists of two anti-parallel arranged heterodimers, each one formed by a 20 kDa (Caspase-1 subunit p20) and a 10 kDa (Caspase-1 subunit p10) subunit. Post-translationally, the two subunits are derived from the precursor sequence by an autocatalytic mechanism. Ubiquitinated via 'Lys-11'-linked polyubiquitination. Deubiquitinated by USP8.

It localises to the cytoplasm. The protein localises to the cell membrane. It catalyses the reaction Strict requirement for an Asp residue at position P1 and has a preferred cleavage sequence of Tyr-Val-Ala-Asp-|-.. In terms of biological role, thiol protease involved in a variety of inflammatory processes by proteolytically cleaving other proteins, such as the precursors of the inflammatory cytokines interleukin-1 beta (IL1B) and interleukin 18 (IL18) as well as the pyroptosis inducer Gasdermin-D (GSDMD), into active mature peptides. Plays a key role in cell immunity as an inflammatory response initiator: once activated through formation of an inflammasome complex, it initiates a pro-inflammatory response through the cleavage of the two inflammatory cytokines IL1B and IL18, releasing the mature cytokines which are involved in a variety of inflammatory processes. Cleaves a tetrapeptide after an Asp residue at position P1. Also initiates pyroptosis, a programmed lytic cell death pathway, through cleavage of GSDMD. In contrast to cleavage of interleukin IL1B, recognition and cleavage of GSDMD is not strictly dependent on the consensus cleavage site but depends on an exosite interface on CASP1 that recognizes and binds the Gasdermin-D, C-terminal (GSDMD-CT) part. Cleaves and activates CASP7 in response to bacterial infection, promoting plasma membrane repair. Upon inflammasome activation, during DNA virus infection but not RNA virus challenge, controls antiviral immunity through the cleavage of CGAS, rendering it inactive. In apoptotic cells, cleaves SPHK2 which is released from cells and remains enzymatically active extracellularly. The sequence is that of Caspase-1 (CASP1) from Sus scrofa (Pig).